The sequence spans 200 residues: Large ribosomal subunit protein uL22c (200 aa).

The protein belongs to the universal ribosomal protein uL22 family. As to quaternary structure, part of the 50S ribosomal subunit.

The protein resides in the plastid. It localises to the chloroplast. Its function is as follows. This protein binds specifically to 23S rRNA. Functionally, the globular domain of the protein is located near the polypeptide exit tunnel on the outside of the subunit, while an extended beta-hairpin is found that lines the wall of the exit tunnel in the center of the 70S ribosome. The sequence is that of Large ribosomal subunit protein uL22c (rpl22) from Medicago sativa (Alfalfa).